The sequence spans 723 residues: Polyribonucleotide nucleotidyltransferase (723 aa).

Residues Asp-488 and Asp-494 each contribute to the Mg(2+) site. In terms of domain architecture, KH spans 555–614 (PKIITLNIKPEKIKDVIGPGGKQINAIIDETGVKIDIEQDGTVYIASQDQAMNRKAIAII). The 69-residue stretch at 624-692 (GEVYTGKVRR…QQGRVNLSRK (69 aa)) folds into the S1 motif domain. A disordered region spans residues 692-723 (KALLEKKEQPEGDKKPQAEKKFYPKTKKPESK). The span at 693–723 (ALLEKKEQPEGDKKPQAEKKFYPKTKKPESK) shows a compositional bias: basic and acidic residues.

It belongs to the polyribonucleotide nucleotidyltransferase family. Requires Mg(2+) as cofactor.

The protein localises to the cytoplasm. It catalyses the reaction RNA(n+1) + phosphate = RNA(n) + a ribonucleoside 5'-diphosphate. Its function is as follows. Involved in mRNA degradation. Catalyzes the phosphorolysis of single-stranded polyribonucleotides processively in the 3'- to 5'-direction. The chain is Polyribonucleotide nucleotidyltransferase from Listeria monocytogenes serovar 1/2a (strain ATCC BAA-679 / EGD-e).